Consider the following 1054-residue polypeptide: Translation initiation factor IF-2 (1054 aa).

Disordered regions lie at residues 48–390 (RSKL…LDLD) and 409–458 (LARP…GTEP). A compositionally biased stretch (pro residues) spans 65–76 (KPPSESLPPEPP). Residues 160 to 169 (SEATQKPETV) are compositionally biased toward polar residues. Over residues 179–193 (SESAAAKASGSEPSP) the composition is skewed to low complexity. Composition is skewed to pro residues over residues 221-235 (PQKA…PSEA) and 304-316 (PTRP…PPEP). The segment covering 365 to 378 (RAARVQAKRKRSRR) has biased composition (basic residues). A compositionally biased stretch (low complexity) spans 421 to 437 (PPAATAAPPARPRPAAR). In terms of domain architecture, tr-type G spans 545 to 718 (SRPPVVTIMG…LLVADVAELQ (174 aa)). The tract at residues 554 to 561 (GHVDHGKT) is G1. 554 to 561 (GHVDHGKT) serves as a coordination point for GTP. A G2 region spans residues 579–583 (GITQR). Residues 604–607 (DTPG) form a G3 region. Residues 604 to 608 (DTPGH) and 658 to 661 (NKID) each bind GTP. Positions 658-661 (NKID) are G4. The G5 stretch occupies residues 694 to 696 (SAL).

Belongs to the TRAFAC class translation factor GTPase superfamily. Classic translation factor GTPase family. IF-2 subfamily.

It is found in the cytoplasm. One of the essential components for the initiation of protein synthesis. Protects formylmethionyl-tRNA from spontaneous hydrolysis and promotes its binding to the 30S ribosomal subunits. Also involved in the hydrolysis of GTP during the formation of the 70S ribosomal complex. This Synechococcus sp. (strain JA-2-3B'a(2-13)) (Cyanobacteria bacterium Yellowstone B-Prime) protein is Translation initiation factor IF-2.